The primary structure comprises 1252 residues: Putative late blight resistance protein homolog R1B-11 (1252 aa).

A coiled-coil region spans residues 543–566 (RYSDSLAFLKNQLQVIQTEFESLQ). NB-ARC domains follow at residues 684–736 (SVRR…RSRI) and 786–830 (SYHV…SSEG). LRR repeat units follow at residues 955-980 (FKFL…PYLR), 998-1026 (LWNL…VWDM), 1077-1100 (LKHL…KVSS), 1103-1125 (FPKL…ADDA), 1126-1149 (FPNL…CFTD), 1187-1212 (LVII…RLSS), and 1213-1236 (LPGI…DVDA). Positions 1188–1252 (VIIKKLVLKF…VGKLNKRDML (65 aa)) constitute an HMA domain.

It belongs to the disease resistance NB-LRR family.

It is found in the cytoplasm. Its subcellular location is the membrane. Confers resistance to late blight (Phytophthora infestans) races carrying the avirulence gene Avr1. Resistance proteins guard the plant against pathogens that contain an appropriate avirulence protein via an indirect interaction with this avirulence protein. That triggers a defense system including the hypersensitive response, which restricts the pathogen growth. The polypeptide is Putative late blight resistance protein homolog R1B-11 (R1B-11) (Solanum demissum (Wild potato)).